Consider the following 191-residue polypeptide: Superoxide dismutase [Mn/Fe] (191 aa).

Fe(3+) is bound by residues H27, H74, D157, and H161. 4 residues coordinate Mn(2+): H27, H74, D157, and H161.

The protein belongs to the iron/manganese superoxide dismutase family. Homodimer. Requires Mn(2+) as cofactor. Fe(3+) is required as a cofactor.

The enzyme catalyses 2 superoxide + 2 H(+) = H2O2 + O2. Inhibited by hydrogen peroxide. Destroys superoxide anion radicals which are normally produced within the cells and which are toxic to biological systems. Catalyzes the dismutation of superoxide anion radicals into O2 and H2O2 by successive reduction and oxidation of the transition metal ion at the active site. This is Superoxide dismutase [Mn/Fe] (sodB) from Porphyromonas gingivalis (strain ATCC BAA-308 / W83).